The sequence spans 816 residues: Sodium/hydrogen exchanger 1 (816 aa).

At 1–98 the chain is on the extracellular side; it reads MLLWSAVRGL…FPVLGIDYTH (98 aa). Positions 37–50 are enriched in polar residues; that stretch reads LQLSPTDSTTPDSQ. Residues 37–79 form a disordered region; sequence LQLSPTDSTTPDSQPSRERSIGDVTTAPPEVTPESRPVNRSVT. N75 is a glycosylation site (N-linked (GlcNAc...) asparagine). The helical transmembrane segment at 99–121 threads the bilayer; that stretch reads VRTPFEISLWILLACLMKIGFHV. The Cytoplasmic segment spans residues 122–130; sequence IPTISSIVP. The helical transmembrane segment at 131 to 148 threads the bilayer; that stretch reads ESCLLIVVGLLVGGLIKG. Topologically, residues 149-158 are extracellular; the sequence is VGEKPPFLQS. A helical transmembrane segment spans residues 159–176; it reads EVFFLFLLPPIILDAGYF. Topologically, residues 177-186 are cytoplasmic; the sequence is LPLRQFTENL. Residues 187–215 traverse the membrane as a helical segment; it reads GTILIFAVVGTLWNAFFLGGLMYAVCLVG. Residues 216 to 222 lie on the Extracellular side of the membrane; sequence GEQINNI. Residues 223–249 form a helical membrane-spanning segment; that stretch reads GLLDNLLFGSIISAVDPVAVLAVFEEI. At 250–252 the chain is on the cytoplasmic side; sequence HIN. A helical transmembrane segment spans residues 253-283; that stretch reads ELLHILVFGESLLNDAVTVVLYHLFEEFANY. Topologically, residues 284 to 287 are extracellular; the sequence is DHVG. Residues 288–322 form a helical membrane-spanning segment; that stretch reads IVDIVLGFLSFFVVALGGVFVGVVYGVIAAFTSRF. Residues 323–328 lie on the Cytoplasmic side of the membrane; sequence TAHIRV. The helical transmembrane segment at 329–341 threads the bilayer; the sequence is IEPLFVFLYSYMA. Topologically, residues 342 to 350 are extracellular; sequence YLSAELFHL. Residues 351 to 371 traverse the membrane as a helical segment; that stretch reads SGIMALIASGVVMRPYVEANI. Residues 372 to 373 are Cytoplasmic-facing; that stretch reads SH. A helical membrane pass occupies residues 374-404; it reads KSHTTIKYFLKMWSSVSETLIFIFLGVSTVA. The Extracellular portion of the chain corresponds to 405 to 410; that stretch reads GSHHWN. Residues 411 to 438 form a helical membrane-spanning segment; that stretch reads WTFVISTLLFCLIARVLGVLGLTWFINK. The Cytoplasmic portion of the chain corresponds to 439–444; that stretch reads FRIVKL. Residues 445-469 form a helical membrane-spanning segment; that stretch reads TPKDQFIIAYGGLRGAIAFSLGYLL. Residues 470 to 475 are Extracellular-facing; the sequence is DKKHFP. A helical membrane pass occupies residues 476 to 505; the sequence is MCDLFLTAIITVIFFTVFVQGMTIRPLVDL. Residues 503–545 form an interaction with TESC region; it reads VDLLAVKKKQETKRSINEEIHTQFLDHLLTGIEDICGHYGHHH. At 506–816 the chain is on the cytoplasmic side; that stretch reads LAVKKKQETK…EGEPFIPKGQ (311 aa). The interval 509 to 516 is PI(4,5)P2-binding region; the sequence is KKKQETKR. The segment at 515-545 is interaction with CHP2; it reads KRSINEEIHTQFLDHLLTGIEDICGHYGHHH. A confers pH-dependent PI(4,5)P2 binding region spans residues 540 to 545; sequence HYGHHH. Residues 552-560 form a PI(4,5)P2-binding region region; sequence RFNKKYVKK. S599 and S602 each carry phosphoserine. T603 is modified (phosphothreonine). A phosphoserine mark is found at S605 and S648. The tract at residues 633-816 is interaction with TESC; it reads KILRNNLQKT…EGEPFIPKGQ (184 aa). Positions 633–816 are interaction with CALM1; that stretch reads KILRNNLQKT…EGEPFIPKGQ (184 aa). Residues 684 to 687 form an interaction with PPP3CA region; it reads LTVP. Phosphoserine occurs at positions 693, 697, and 703. An interaction with PPP3CA region spans residues 715-720; the sequence is PVITID. S723, S726, S729, S786, S788, and S797 each carry phosphoserine. Positions 748–816 are disordered; that stretch reads PRVAEEAAEE…EGEPFIPKGQ (69 aa). A compositionally biased stretch (polar residues) spans 783–792; it reads PSDSPSSQRM.

It belongs to the monovalent cation:proton antiporter 1 (CPA1) transporter (TC 2.A.36) family. As to quaternary structure, homodimer; dimerization is crucial for its function. Oligomer. Interacts with CALM in a calcium-dependent manner. Interacts with TESC. Interacts (via the juxtamembrane region of the cytoplasmic C-terminal domain) with CHP1; the interaction occurs at the plasma membrane in a calcium-dependent manner. Interacts with CHP2; the interaction occurs in a calcium-dependent manner. Interacts with EZR; regulates the cytoskeletal interactions of SLC9A1 and promotes stress fiber formation. In terms of processing, ubiquitinated, leading to its degradation by the proteasome. Ubiquitination is reduced by CHP1. Post-translationally, O-glycosylated. Palmitoylated; may play a major role in SLC9A1 regulation. In terms of processing, phosphorylation at Ser-648 by AKT1 reduces SLC9A1 binding to CALM1. In terms of tissue distribution, kidney and intestine.

The protein localises to the cell membrane. Its subcellular location is the basolateral cell membrane. The enzyme catalyses Na(+)(in) + H(+)(out) = Na(+)(out) + H(+)(in). The catalysed reaction is Li(+)(out) + H(+)(in) = Li(+)(in) + H(+)(out). It catalyses the reaction Li(+)(in) + Na(+)(out) = Li(+)(out) + Na(+)(in). With respect to regulation, activated at acidic pHs. Inhibited by cariporide and eniporide. Phosphatidylinositol 4,5-bisphosphate (PI(4,5)P2) and phosphatidylinositol 3,4,5-trisphosphate (PI(3,4,5)P3) bind and differentially regulate SLC9A1 activity. Its function is as follows. Electroneutral Na(+) /H(+) antiporter that extrudes Na(+) in exchange for external protons driven by the inward sodium ion chemical gradient, protecting cells from acidification that occurs from metabolism. Exchanges intracellular H(+) ions for extracellular Na(+) in 1:1 stoichiometry. Plays a key role in maintening intracellular pH neutral and cell volume, and thus is important for cell growth, proliferation, migration and survival. In addition, can transport lithium Li(+) and functions also as a Na(+)/Li(+) antiporter. SLC9A1 also functions in membrane anchoring and organization of scaffolding complexes that coordinate signaling inputs. This is Sodium/hydrogen exchanger 1 (SLC9A1) from Oryctolagus cuniculus (Rabbit).